Reading from the N-terminus, the 630-residue chain is Scarecrow-like protein 34 (630 aa).

The GRAS domain occupies 240 to 628 (KKKKSQVVDF…RTLYASSCWV (389 aa)). The leucine repeat I (LRI) stretch occupies residues 247 to 312 (VDFRTLLTHC…GSTGPMIQTY (66 aa)). Residues 331–396 (YRVYLSSSPF…DVPRKLRITG (66 aa)) are VHIID. Positions 362-366 (LHIVD) match the VHIID motif. A leucine repeat II (LRII) region spans residues 412-444 (ETGRRLAEYCKRFNVPFEYKAIASQNWETIRIE). The segment at 454–549 (LAVNAGLRLK…REFYGREAMN (96 aa)) is PFYRE. The interval 552-628 (ACEEADRVER…RTLYASSCWV (77 aa)) is SAW.

The protein belongs to the GRAS family.

It is found in the nucleus. Functionally, probable transcription factor involved in plant development. The protein is Scarecrow-like protein 34 (SCL34) of Arabidopsis thaliana (Mouse-ear cress).